The following is a 212-amino-acid chain: Probable chemoreceptor glutamine deamidase CheD (212 aa).

Belongs to the CheD family.

It catalyses the reaction L-glutaminyl-[protein] + H2O = L-glutamyl-[protein] + NH4(+). In terms of biological role, probably deamidates glutamine residues to glutamate on methyl-accepting chemotaxis receptors (MCPs), playing an important role in chemotaxis. The polypeptide is Probable chemoreceptor glutamine deamidase CheD (Oleidesulfovibrio alaskensis (strain ATCC BAA-1058 / DSM 17464 / G20) (Desulfovibrio alaskensis)).